A 685-amino-acid chain; its full sequence is Hemocyanin subunit X (685 aa).

The signal sequence occupies residues M1–A20. Residues H210, H214, and H243 each coordinate Cu cation. N329 carries N-linked (GlcNAc...) asparagine glycosylation. Residues H367, H371, and H407 each coordinate Cu cation. A disulfide bridge connects residues C577 and C625.

The protein belongs to the tyrosinase family. Hemocyanin subfamily.

The protein resides in the secreted. It localises to the extracellular space. In terms of biological role, hemocyanins are copper-containing oxygen carriers occurring freely dissolved in the hemolymph of many mollusks and arthropods. In Scutigera coleoptrata (House centipede), this protein is Hemocyanin subunit X (HCX).